We begin with the raw amino-acid sequence, 415 residues long: Magnesium-chelatase subunit ChlI, chloroplastic (415 aa).

The N-terminal 67 residues, 1–67 (MASAFSPATA…APSATQQEAK (67 aa)), are a transit peptide targeting the chloroplast. Intrachain disulfides connect Cys93/Cys184 and Cys345/Cys387.

This sequence belongs to the Mg-chelatase subunits D/I family. The magnesium chelatase complex is a heterotrimer consisting of subunits CHLI, CHLD and CHLH.

It localises to the plastid. The protein localises to the chloroplast. It carries out the reaction protoporphyrin IX + Mg(2+) + ATP + H2O = Mg-protoporphyrin IX + ADP + phosphate + 3 H(+). Its pathway is porphyrin-containing compound metabolism; chlorophyll biosynthesis. Its activity is regulated as follows. Redox regulation; active in reducing conditions, inactive in oxidizing conditions. Thioredoxins f and m mediate the reversible reductive activation of oxidized CHLI. Involved in chlorophyll biosynthesis. Catalyzes the insertion of magnesium ion into protoporphyrin IX to yield Mg-protoporphyrin IX. The reaction takes place in two steps, with an ATP-dependent activation followed by an ATP-dependent chelation step. The protein is Magnesium-chelatase subunit ChlI, chloroplastic (CHLI) of Oryza sativa subsp. japonica (Rice).